Consider the following 216-residue polypeptide: Noggin-1 (216 aa).

Residues Met1–Ala18 form the signal peptide. N-linked (GlcNAc...) asparagine glycosylation is present at Asn55.

This sequence belongs to the noggin family. Homodimer; disulfide-linked.

It localises to the secreted. Functionally, inhibitor of bone morphogenetic proteins (BMP) signaling. May play an important role in the dorsoventral patterning of the embryo. In Danio rerio (Zebrafish), this protein is Noggin-1 (nog1).